Reading from the N-terminus, the 729-residue chain is Solute carrier family 15 member 2 (729 aa).

A disordered region spans residues 1 to 34 (MNPFQKNESKETLFSPVSTEEMLPGPPSPPKKST). At 1–57 (MNPFQKNESKETLFSPVSTEEMLPGPPSPPKKSTPKLFGSSYPLSIAFIVVNEFCER) the chain is on the cytoplasmic side. Ser9 carries the post-translational modification Phosphoserine. The residue at position 12 (Thr12) is a Phosphothreonine. Ser28 carries the post-translational modification Phosphoserine. Residues 58–78 (FSYYGMKAVLTLYFLYFLHWN) traverse the membrane as a helical segment. At 79–87 (EDTSTSVYH) the chain is on the extracellular side. The chain crosses the membrane as a helical span at residues 88 to 108 (AFSSLCYFTPILGAAIADSWL). Residues 109-113 (GKFKT) are Cytoplasmic-facing. The chain crosses the membrane as a helical span at residues 114 to 134 (IIYLSLVYVLGHVFKSLGAIP). The Extracellular segment spans residues 135 to 139 (ILGGK). A helical membrane pass occupies residues 140–160 (MLHTILSLVGLSLIALGTGGI). The Cytoplasmic segment spans residues 161–183 (KPCVAAFGGDQFEEEHAEARTRY). A helical membrane pass occupies residues 184 to 204 (FSVFYLSINAGSLISTFITPM). Residues 205-217 (LRGDVKCFGEDCY) are Extracellular-facing. Residues 218 to 238 (ALAFGIPGLLMVLALVVFAMG) traverse the membrane as a helical segment. The Cytoplasmic portion of the chain corresponds to 239-295 (SKMYRKPPPEGNIVAQVTKCIWFAICNRFRNRSEDIPKRQHWLDWAAEKYPKHLIMD). A helical transmembrane segment spans residues 296–316 (VKALTRILFLYIPLPMFWALL). Residues 317 to 343 (DQQGSRWTLQANKMDGDLGFFVLQPDQ) are Extracellular-facing. Residues 344 to 364 (MQVLNPFLVLVFIPLFDLVIY) traverse the membrane as a helical segment. Topologically, residues 365–380 (RLISKCGVNFSSLRKM) are cytoplasmic. Residues 381-401 (AVGMILACLAFAVAALVEIKI) form a helical membrane-spanning segment. At 402–611 (NGMIHPQPAS…PANKLSIAWQ (210 aa)) the chain is on the extracellular side. The interval 402–611 (NGMIHPQPAS…PANKLSIAWQ (210 aa)) is extracellular domain (ECD). Residues Asn448, Asn472, Asn528, and Asn587 are each glycosylated (N-linked (GlcNAc...) asparagine). Residues 612-632 (LPQYVLVTAAEVMFSVTGLEF) traverse the membrane as a helical segment. Residues 633–643 (SYSQAPSSMKS) are Cytoplasmic-facing. Residues 644–664 (VLQAAWLLTVAVGNIIVLIVA) form a helical membrane-spanning segment. Over 665-674 (QFSGLVQWAE) the chain is Extracellular. A helical transmembrane segment spans residues 675–695 (FVLFSCLLLVVCLIFSVMGYY). The Cytoplasmic portion of the chain corresponds to 696–729 (YVPLKSEGIHEATEKQIPHIQGNMINLETKNTRL).

It belongs to the major facilitator superfamily. Proton-dependent oligopeptide transporter (POT/PTR) (TC 2.A.17) family. Interacts (via extracellular domain region) with trypsin. In terms of tissue distribution, expressed in kidney brush border cells (at protein level). Highly expressed in macrophages.

It is found in the apical cell membrane. Its subcellular location is the cytoplasmic vesicle. It localises to the phagosome membrane. The protein localises to the cell membrane. It catalyses the reaction N-acetyl-D-muramoyl-L-alanyl-D-isoglutamine(out) + 3 H(+)(out) = N-acetyl-D-muramoyl-L-alanyl-D-isoglutamine(in) + 3 H(+)(in). The enzyme catalyses a dipeptide(out) + 2 H(+)(out) = a dipeptide(in) + 2 H(+)(in). It carries out the reaction glycyl-L-leucine(out) + 2 H(+)(out) = glycyl-L-leucine(in) + 2 H(+)(in). The catalysed reaction is glycyl-L-lysine(out) + 2 H(+)(out) = glycyl-L-lysine(in) + 2 H(+)(in). It catalyses the reaction glycyl-L-glutamate(out) + 3 H(+)(out) = glycyl-L-glutamate(in) + 3 H(+)(in). The enzyme catalyses L-alanyl-L-alanine(out) + 2 H(+)(out) = L-alanyl-L-alanine(in) + 2 H(+)(in). It carries out the reaction an L-amino acid tripeptide(out) + 2 H(+)(out) = an L-amino acid tripeptide(in) + 2 H(+)(in). The catalysed reaction is carnosine(out) + 2 H(+)(out) = carnosine(in) + 2 H(+)(in). Functionally, proton-coupled amino-acid transporter that transports oligopeptides of 2 to 4 amino acids with a preference for dipeptides. Transports neutral and anionic dipeptides with a proton to peptide stoichiometry of 2:1 or 3:1. In kidney, involved in the absorption of circulating di- and tripeptides from the glomerular filtrate. Can also transport beta-lactam antibiotics, such as the aminocephalosporin cefadroxil, and other antiviral and anticancer drugs. Transports the dipeptide-like aminopeptidase inhibitor bestatin. Also able to transport carnosine. Involved in innate immunity by promoting the detection of microbial pathogens by NOD-like receptors (NLRs). Mediates transport of bacterial peptidoglycans across the plasma membrane or, in macrophages, the phagosome membrane: catalyzes the transport of certain bacterial peptidoglycans, such as muramyl dipeptide (MDP), the NOD2 ligand. The polypeptide is Solute carrier family 15 member 2 (Mus musculus (Mouse)).